Here is a 276-residue protein sequence, read N- to C-terminus: Acyl-[acyl-carrier-protein]--UDP-N-acetylglucosamine O-acyltransferase (276 aa).

It belongs to the transferase hexapeptide repeat family. LpxA subfamily. Homotrimer.

Its subcellular location is the cytoplasm. The catalysed reaction is a (3R)-hydroxyacyl-[ACP] + UDP-N-acetyl-alpha-D-glucosamine = a UDP-3-O-[(3R)-3-hydroxyacyl]-N-acetyl-alpha-D-glucosamine + holo-[ACP]. It functions in the pathway glycolipid biosynthesis; lipid IV(A) biosynthesis; lipid IV(A) from (3R)-3-hydroxytetradecanoyl-[acyl-carrier-protein] and UDP-N-acetyl-alpha-D-glucosamine: step 1/6. Its function is as follows. Involved in the biosynthesis of lipid A, a phosphorylated glycolipid that anchors the lipopolysaccharide to the outer membrane of the cell. The sequence is that of Acyl-[acyl-carrier-protein]--UDP-N-acetylglucosamine O-acyltransferase from Rippkaea orientalis (strain PCC 8801 / RF-1) (Cyanothece sp. (strain PCC 8801)).